Reading from the N-terminus, the 364-residue chain is Ribosomal RNA large subunit methyltransferase M (364 aa).

S-adenosyl-L-methionine is bound by residues S198, 231 to 234, D250, D270, and D286; that span reads APGG. K315 (proton acceptor) is an active-site residue.

It belongs to the class I-like SAM-binding methyltransferase superfamily. RNA methyltransferase RlmE family. RlmM subfamily. Monomer.

It localises to the cytoplasm. The enzyme catalyses cytidine(2498) in 23S rRNA + S-adenosyl-L-methionine = 2'-O-methylcytidine(2498) in 23S rRNA + S-adenosyl-L-homocysteine + H(+). Catalyzes the 2'-O-methylation at nucleotide C2498 in 23S rRNA. The protein is Ribosomal RNA large subunit methyltransferase M of Azoarcus sp. (strain BH72).